The following is a 261-amino-acid chain: tRNA (guanine-N(7)-)-methyltransferase (261 aa).

Residues glutamate 75, glutamate 100, aspartate 127, and aspartate 150 each coordinate S-adenosyl-L-methionine. Aspartate 150 is a catalytic residue. Position 154 (lysine 154) interacts with substrate. Residues 156-161 (RHNKRR) are interaction with RNA. Substrate is bound by residues aspartate 186 and 223–226 (THFE).

The protein belongs to the class I-like SAM-binding methyltransferase superfamily. TrmB family.

The catalysed reaction is guanosine(46) in tRNA + S-adenosyl-L-methionine = N(7)-methylguanosine(46) in tRNA + S-adenosyl-L-homocysteine. The protein operates within tRNA modification; N(7)-methylguanine-tRNA biosynthesis. Catalyzes the formation of N(7)-methylguanine at position 46 (m7G46) in tRNA. This Xanthomonas campestris pv. campestris (strain 8004) protein is tRNA (guanine-N(7)-)-methyltransferase.